The primary structure comprises 489 residues: DBIRD complex subunit ZNF326 (489 aa).

Disordered stretches follow at residues 1 to 28, 62 to 100, 133 to 181, and 205 to 263; these read MDRE…EMGD, EQGH…PSFT, VGSR…RPGL, and PPFK…KNSE. Over residues 7 to 22 the composition is skewed to polar residues; that stretch reads SYNQRSMDSYGNQSYS. Residues 62 to 76 are compositionally biased toward basic and acidic residues; the sequence is EQGHFGDSYDGRYEN. Residues 91-100 are compositionally biased toward polar residues; sequence GGSSWDPSFT. The Bipartite nuclear localization signal motif lies at 200–221; it reads KRKMAPPFKPVGVFGKKQKLSK. C2H2 AKAP95-type zinc fingers lie at residues 273–295 and 365–388; these read CSFC…STTH and CSAC…SADH. The interval 431–489 is disordered; the sequence is ETQPEEQQQEQEEEEEEEEQQEQAAVPEQDLSEEQPAAIAAEPEGEDFTCDPLTTTDEV. Over residues 433 to 451 the composition is skewed to acidic residues; it reads QPEEQQQEQEEEEEEEEQQ.

It belongs to the AKAP95 family. As to quaternary structure, component of the DBIRD complex.

It localises to the nucleus. Functionally, core component of the DBIRD complex, a multiprotein complex that acts at the interface between core mRNP particles and RNA polymerase II (RNAPII) and integrates transcript elongation with the regulation of alternative splicing. This Xenopus tropicalis (Western clawed frog) protein is DBIRD complex subunit ZNF326 (znf326).